The following is a 164-amino-acid chain: MTKLLLGFMGVGKTTVAAQLDEHFLDMDRLIEAKIGMSISAFFSYRGEAAFRKLESDTLQEVLALDNETIVSTGGGVVLSKANRELIRKNHKHNILLTASFEVLYDRLKKDRLCQRPLFLNHSKAEFYAIFQQRMALYEGLADKVINVEHRTPKEVAAIIANMS.

10–15 (GVGKTT) contacts ATP. T14 contacts Mg(2+). Positions 28, 52, and 75 each coordinate substrate. R116 serves as a coordination point for ATP. Residue R134 participates in substrate binding. ATP is bound at residue R151.

It belongs to the shikimate kinase family. As to quaternary structure, monomer. Mg(2+) is required as a cofactor.

It is found in the cytoplasm. It catalyses the reaction shikimate + ATP = 3-phosphoshikimate + ADP + H(+). It participates in metabolic intermediate biosynthesis; chorismate biosynthesis; chorismate from D-erythrose 4-phosphate and phosphoenolpyruvate: step 5/7. Its function is as follows. Catalyzes the specific phosphorylation of the 3-hydroxyl group of shikimic acid using ATP as a cosubstrate. This chain is Shikimate kinase, found in Streptococcus equi subsp. zooepidemicus (strain MGCS10565).